A 329-amino-acid polypeptide reads, in one-letter code: Beta-ketoacyl-[acyl-carrier-protein] synthase III (329 aa).

Residues cysteine 113 and histidine 255 contribute to the active site. The interval 256–260 (QANQR) is ACP-binding. The active site involves asparagine 285.

The protein belongs to the thiolase-like superfamily. FabH family. Homodimer.

It is found in the cytoplasm. The catalysed reaction is malonyl-[ACP] + acetyl-CoA + H(+) = 3-oxobutanoyl-[ACP] + CO2 + CoA. It participates in lipid metabolism; fatty acid biosynthesis. Catalyzes the condensation reaction of fatty acid synthesis by the addition to an acyl acceptor of two carbons from malonyl-ACP. Catalyzes the first condensation reaction which initiates fatty acid synthesis and may therefore play a role in governing the total rate of fatty acid production. Possesses both acetoacetyl-ACP synthase and acetyl transacylase activities. Its substrate specificity determines the biosynthesis of branched-chain and/or straight-chain of fatty acids. The polypeptide is Beta-ketoacyl-[acyl-carrier-protein] synthase III (Chlorobium luteolum (strain DSM 273 / BCRC 81028 / 2530) (Pelodictyon luteolum)).